The sequence spans 151 residues: Deoxyuridine 5'-triphosphate nucleotidohydrolase (151 aa).

Substrate-binding positions include 70–72 (RSG), Asn83, 87–89 (LID), and Met97.

This sequence belongs to the dUTPase family. Mg(2+) serves as cofactor.

The catalysed reaction is dUTP + H2O = dUMP + diphosphate + H(+). It participates in pyrimidine metabolism; dUMP biosynthesis; dUMP from dCTP (dUTP route): step 2/2. In terms of biological role, this enzyme is involved in nucleotide metabolism: it produces dUMP, the immediate precursor of thymidine nucleotides and it decreases the intracellular concentration of dUTP so that uracil cannot be incorporated into DNA. This chain is Deoxyuridine 5'-triphosphate nucleotidohydrolase, found in Pseudomonas fluorescens (strain SBW25).